Here is a 281-residue protein sequence, read N- to C-terminus: 4-hydroxy-3-methylbut-2-enyl diphosphate reductase (281 aa).

C12 is a binding site for [4Fe-4S] cluster. 2 residues coordinate (2E)-4-hydroxy-3-methylbut-2-enyl diphosphate: H41 and H74. H41 and H74 together coordinate dimethylallyl diphosphate. Isopentenyl diphosphate is bound by residues H41 and H74. C96 contributes to the [4Fe-4S] cluster binding site. Position 124 (H124) interacts with (2E)-4-hydroxy-3-methylbut-2-enyl diphosphate. H124 provides a ligand contact to dimethylallyl diphosphate. Position 124 (H124) interacts with isopentenyl diphosphate. E126 serves as the catalytic Proton donor. Residue T164 coordinates (2E)-4-hydroxy-3-methylbut-2-enyl diphosphate. C193 contacts [4Fe-4S] cluster. (2E)-4-hydroxy-3-methylbut-2-enyl diphosphate is bound by residues S221, N223, and S265. Dimethylallyl diphosphate-binding residues include S221, N223, and S265. The isopentenyl diphosphate site is built by S221, N223, and S265.

Belongs to the IspH family. Requires [4Fe-4S] cluster as cofactor.

The catalysed reaction is isopentenyl diphosphate + 2 oxidized [2Fe-2S]-[ferredoxin] + H2O = (2E)-4-hydroxy-3-methylbut-2-enyl diphosphate + 2 reduced [2Fe-2S]-[ferredoxin] + 2 H(+). It carries out the reaction dimethylallyl diphosphate + 2 oxidized [2Fe-2S]-[ferredoxin] + H2O = (2E)-4-hydroxy-3-methylbut-2-enyl diphosphate + 2 reduced [2Fe-2S]-[ferredoxin] + 2 H(+). It functions in the pathway isoprenoid biosynthesis; dimethylallyl diphosphate biosynthesis; dimethylallyl diphosphate from (2E)-4-hydroxy-3-methylbutenyl diphosphate: step 1/1. The protein operates within isoprenoid biosynthesis; isopentenyl diphosphate biosynthesis via DXP pathway; isopentenyl diphosphate from 1-deoxy-D-xylulose 5-phosphate: step 6/6. In terms of biological role, catalyzes the conversion of 1-hydroxy-2-methyl-2-(E)-butenyl 4-diphosphate (HMBPP) into a mixture of isopentenyl diphosphate (IPP) and dimethylallyl diphosphate (DMAPP). Acts in the terminal step of the DOXP/MEP pathway for isoprenoid precursor biosynthesis. The sequence is that of 4-hydroxy-3-methylbut-2-enyl diphosphate reductase from Nitratidesulfovibrio vulgaris (strain DSM 19637 / Miyazaki F) (Desulfovibrio vulgaris).